Here is a 369-residue protein sequence, read N- to C-terminus: DNA replication and repair protein RecF (369 aa).

Position 30–37 (30–37 (GQNGMGKT)) interacts with ATP.

This sequence belongs to the RecF family.

It localises to the cytoplasm. The RecF protein is involved in DNA metabolism; it is required for DNA replication and normal SOS inducibility. RecF binds preferentially to single-stranded, linear DNA. It also seems to bind ATP. The polypeptide is DNA replication and repair protein RecF (Bacteroides thetaiotaomicron (strain ATCC 29148 / DSM 2079 / JCM 5827 / CCUG 10774 / NCTC 10582 / VPI-5482 / E50)).